A 480-amino-acid polypeptide reads, in one-letter code: uncharacterized protein (480 aa).

Residues 16–46 (CDRCRRRKIRCTGSDIPGQPCLACQKAHADC) constitute a DNA-binding region (zn(2)-C6 fungal-type). The span at 298 to 307 (SFGASVSPKS) shows a compositional bias: low complexity. The disordered stretch occupies residues 298 to 325 (SFGASVSPKSTPGSNSTGAAVDTNSVHS). Over residues 308–325 (TPGSNSTGAAVDTNSVHS) the composition is skewed to polar residues.

Its subcellular location is the cytoplasm. The protein resides in the nucleus. This is an uncharacterized protein from Schizosaccharomyces pombe (strain 972 / ATCC 24843) (Fission yeast).